The chain runs to 184 residues: NADH-quinone oxidoreductase subunit B 2 (184 aa).

[4Fe-4S] cluster is bound by residues cysteine 59, cysteine 60, cysteine 125, and cysteine 153.

It belongs to the complex I 20 kDa subunit family. In terms of assembly, NDH-1 is composed of 14 different subunits. Subunits NuoB, C, D, E, F, and G constitute the peripheral sector of the complex. It depends on [4Fe-4S] cluster as a cofactor.

The protein localises to the cell inner membrane. It carries out the reaction a quinone + NADH + 5 H(+)(in) = a quinol + NAD(+) + 4 H(+)(out). NDH-1 shuttles electrons from NADH, via FMN and iron-sulfur (Fe-S) centers, to quinones in the respiratory chain. Couples the redox reaction to proton translocation (for every two electrons transferred, four hydrogen ions are translocated across the cytoplasmic membrane), and thus conserves the redox energy in a proton gradient. This is NADH-quinone oxidoreductase subunit B 2 from Solibacter usitatus (strain Ellin6076).